The following is a 303-amino-acid chain: Taste receptor type 2 member 13 (303 aa).

Topologically, residues 1-7 (MKSALPS) are extracellular. A helical transmembrane segment spans residues 8 to 28 (IFTLVIIAEFIIGNLSNGFIV). Residues 29–55 (LINCIDWVSKRELSSVDKLLIILAISR) lie on the Cytoplasmic side of the membrane. The chain crosses the membrane as a helical span at residues 56-76 (IGLIWEILVSWFLALHYLAIF). The Extracellular segment spans residues 77-85 (VSGTGLRIM). The chain crosses the membrane as a helical span at residues 86 to 106 (IFSWIVSNHFNLWLATILSIF). Residues 107 to 128 (YLLKIASFSSPAFLYLKWRVNK) are Cytoplasmic-facing. Residues 129–149 (VILLILLGTLVFLFLNLIQIN) traverse the membrane as a helical segment. Residues 150 to 184 (MHIKDWLDRYERNTTWNFSMSDFETFSVSVKFTMT) are Extracellular-facing. Asn162 and Asn166 each carry an N-linked (GlcNAc...) asparagine glycan. Residues 185–205 (MFSLTPFTVAFISFLLLIFSL) traverse the membrane as a helical segment. Over 206–232 (QKHLQKMQLNYKGHRDPKTKVHTNALK) the chain is Cytoplasmic. Residues 233–253 (IVISFLLFYASFFLCVLXSWI) traverse the membrane as a helical segment. Topologically, residues 254-261 (SELYQNTV) are extracellular. A helical membrane pass occupies residues 262–282 (IYMLCETIGVFYPSSHSFLLI). Over 283-303 (LGNAKLRQAFLLVAAKVWAKR) the chain is Cytoplasmic.

It belongs to the G-protein coupled receptor T2R family.

The protein resides in the membrane. Its function is as follows. Receptor that may play a role in the perception of bitterness and is gustducin-linked. May play a role in sensing the chemical composition of the gastrointestinal content. The activity of this receptor may stimulate alpha gustducin, mediate PLC-beta-2 activation and lead to the gating of TRPM5. The sequence is that of Taste receptor type 2 member 13 (TAS2R13) from Gorilla gorilla gorilla (Western lowland gorilla).